The following is a 185-amino-acid chain: Peptidyl-tRNA hydrolase (185 aa).

Tyr14 lines the tRNA pocket. Residue His19 is the Proton acceptor of the active site. Tyr65, Asn67, and Asn113 together coordinate tRNA.

This sequence belongs to the PTH family. Monomer.

The protein resides in the cytoplasm. It catalyses the reaction an N-acyl-L-alpha-aminoacyl-tRNA + H2O = an N-acyl-L-amino acid + a tRNA + H(+). Functionally, hydrolyzes ribosome-free peptidyl-tRNAs (with 1 or more amino acids incorporated), which drop off the ribosome during protein synthesis, or as a result of ribosome stalling. In terms of biological role, catalyzes the release of premature peptidyl moieties from peptidyl-tRNA molecules trapped in stalled 50S ribosomal subunits, and thus maintains levels of free tRNAs and 50S ribosomes. This Rickettsia akari (strain Hartford) protein is Peptidyl-tRNA hydrolase.